The chain runs to 72 residues: Gas vesicle protein A (72 aa).

Belongs to the gas vesicle GvpA family. As to quaternary structure, the gas vesicle shell is 2 nm thick and consists of a single layer of this protein. It forms helical ribs nearly perpendicular to the long axis of the vesicle.

It is found in the gas vesicle shell. Its function is as follows. Gas vesicles are hollow, gas filled proteinaceous nanostructures found in some microorganisms. During planktonic growth they allow positioning of the organism at a favorable depth for light or nutrient acquisition. GvpA forms the protein shell. This Haloquadratum walsbyi (strain DSM 16790 / HBSQ001) protein is Gas vesicle protein A.